The sequence spans 321 residues: Protein APA1 (321 aa).

The tract at residues 50–70 is disordered; the sequence is SLIEKPERGQTPEGEDPLGKP. Lys54 is a binding site for substrate. A Phosphothreonine modification is found at Thr60. Substrate contacts are provided by residues 93–94, Asn145, and 151–154; these read NK and GSSL. His158 serves as the catalytic Nucleophile. Substrate is bound by residues Gln160, 273–275, Met280, and Lys284; that span reads NST.

It belongs to the ATP adenylyltransferase family. Monomer. A divalent metal cation is required as a cofactor. In terms of processing, the N-terminus is blocked.

The protein localises to the cytoplasm. Its subcellular location is the nucleus. It carries out the reaction ADP + ATP + H(+) = P(1),P(4)-bis(5'-adenosyl) tetraphosphate + phosphate. It catalyses the reaction sulfate + ADP + H(+) = adenosine 5'-phosphosulfate + phosphate. Its function is as follows. Ap4A phosphorylase catalyzes the phosphorolytic degradation of bis(5'-adenosyl) tetraphosphate (Ap4A) into ADP and ATP. Can also use other Np4N' nucleotides (where N and N' stand for A,C,G or U) as substrates with equal efficiency. Cannot catalyze the reverse reaction. Additionally, this enzyme can also catalyze the phosphorolytic degradation of adenosine 5'-phosphosulfate (AMPS) into ADP and sulfate, the reversible exchange reaction between inorganic phosphate and the beta-phosphate of a nucleoside diphosphate (NDP), and the synthesis of Ap4A from AMPS plus ATP. This chain is Protein APA1, found in Saccharomyces cerevisiae (strain ATCC 204508 / S288c) (Baker's yeast).